Consider the following 964-residue polypeptide: Syndetin (964 aa).

N-acetylmethionine is present on Met-1. The disordered stretch occupies residues 1 to 25; sequence MQKIKSLMTRQGLKSPPESLNDLGA. The residue at position 15 (Ser-15) is a Phosphoserine. 2 coiled-coil regions span residues 81–107 and 216–244; these read LNLQ…VADL and YSCI…LSKI. A phosphoserine mark is found at Ser-494, Ser-498, Ser-559, and Ser-561. Residues 532–563 are disordered; the sequence is DEETEDVLASNGYESDEQEKSAYQDYDSDSDV. Lys-963 is covalently cross-linked (Glycyl lysine isopeptide (Lys-Gly) (interchain with G-Cter in SUMO1); alternate). A Glycyl lysine isopeptide (Lys-Gly) (interchain with G-Cter in SUMO2); alternate cross-link involves residue Lys-963.

Belongs to the syndetin family. In terms of assembly, component of the endosome-associated retrograde protein (EARP) complex, composed of VPS51, VPS52, VPS53 and VPS50/Syndetin. The EARP complex interacts with EIPR1. Interacts with VPS51 and VPS53 in an EIPR1-independent manner. In terms of tissue distribution, expressed in the brain (at protein level).

It is found in the recycling endosome. Its subcellular location is the membrane. In terms of biological role, acts as a component of the EARP complex that is involved in endocytic recycling. The EARP complex associates with Rab4-positive endosomes and promotes recycling of internalized transferrin receptor (TFRC) to the plasma membrane. Within the EARP complex, required to tether the complex to recycling endosomes. Not involved in retrograde transport from early and late endosomes to the trans-Golgi network (TGN). The protein is Syndetin of Rattus norvegicus (Rat).